Reading from the N-terminus, the 309-residue chain is Syndecan-1 (309 aa).

The first 22 residues, 1–22 (MRRAALWLWLCALALRLQPVLP), serve as a signal peptide directing secretion. At 23–253 (QIVTVNVPPE…GLLDRKEVLG (231 aa)) the chain is on the extracellular side. Disordered stretches follow at residues 28 to 57 (NVPP…DITL) and 145 to 185 (TTAQ…GGTS). The segment covering 32–42 (EDQDGSGDDSD) has biased composition (acidic residues). O-linked (Xyl...) (chondroitin sulfate) serine glycosylation is present at serine 37. Asparagine 43 carries N-linked (GlcNAc...) asparagine glycosylation. Residues serine 45 and serine 47 are each glycosylated (O-linked (Xyl...) (heparan sulfate) serine). The segment covering 173–183 (GQPDQQPPSGG) has biased composition (low complexity). O-linked (Xyl...) (chondroitin sulfate) serine glycans are attached at residues serine 205 and serine 215. Residues 254–274 (GVIAGGLVGLIFAVCLVGFML) form a helical membrane-spanning segment. Residues 275–309 (YRMKKKDEGSYSLEEPKQANGGAYQKPTKQEEFYA) lie on the Cytoplasmic side of the membrane. The disordered stretch occupies residues 283-309 (GSYSLEEPKQANGGAYQKPTKQEEFYA). At serine 284 the chain carries Phosphoserine.

It belongs to the syndecan proteoglycan family. In terms of assembly, interacts with CDCP1. Interacts (via C-terminus) with TIAM1 (via PDZ domain). Interacts with MDK. In terms of processing, shedding is enhanced by a number of factors such as heparanase, thrombin or EGF. Also by stress and wound healing. PMA-mediated shedding is inhibited by TIMP3.

The protein resides in the membrane. The protein localises to the secreted. It localises to the extracellular exosome. Functionally, cell surface proteoglycan that contains both heparan sulfate and chondroitin sulfate and that links the cytoskeleton to the interstitial matrix. Regulates exosome biogenesis in concert with SDCBP and PDCD6IP. Able to induce its own expression in dental mesenchymal cells and also in the neighboring dental epithelial cells via an MSX1-mediated pathway. This Mesocricetus auratus (Golden hamster) protein is Syndecan-1.